The chain runs to 53 residues: Toxin CjTL7 (53 aa).

Residues Met-1 to Gly-22 form the signal peptide. Trp-51 carries the post-translational modification Tryptophan amide.

Contains 4 disulfide bonds.

It is found in the secreted. Its subcellular location is the nematocyst. Functionally, in vivo, only causes a weak change in behavior in shrimps (C.multidentata) (slight twitching of the walking legs), but no lethal effect is observed. No activity is observed when injected into fly larvae (M.domestica). The polypeptide is Toxin CjTL7 (Epiactis japonica (Sea anemone)).